The following is a 252-amino-acid chain: 2-succinyl-6-hydroxy-2,4-cyclohexadiene-1-carboxylate synthase (252 aa).

It belongs to the AB hydrolase superfamily. MenH family. In terms of assembly, monomer.

It carries out the reaction 5-enolpyruvoyl-6-hydroxy-2-succinyl-cyclohex-3-ene-1-carboxylate = (1R,6R)-6-hydroxy-2-succinyl-cyclohexa-2,4-diene-1-carboxylate + pyruvate. It functions in the pathway quinol/quinone metabolism; 1,4-dihydroxy-2-naphthoate biosynthesis; 1,4-dihydroxy-2-naphthoate from chorismate: step 3/7. Its pathway is quinol/quinone metabolism; menaquinone biosynthesis. Functionally, catalyzes a proton abstraction reaction that results in 2,5-elimination of pyruvate from 2-succinyl-5-enolpyruvyl-6-hydroxy-3-cyclohexene-1-carboxylate (SEPHCHC) and the formation of 2-succinyl-6-hydroxy-2,4-cyclohexadiene-1-carboxylate (SHCHC). In Shigella boydii serotype 4 (strain Sb227), this protein is 2-succinyl-6-hydroxy-2,4-cyclohexadiene-1-carboxylate synthase.